We begin with the raw amino-acid sequence, 479 residues long: Ribulose bisphosphate carboxylase large chain (479 aa).

A propeptide spanning residues 1–2 (MS) is cleaved from the precursor. Pro-3 carries the N-acetylproline modification. The substrate site is built by Asn-123 and Thr-173. Lys-175 functions as the Proton acceptor in the catalytic mechanism. Lys-177 serves as a coordination point for substrate. Mg(2+) contacts are provided by Lys-201, Asp-203, and Glu-204. An N6-carboxylysine modification is found at Lys-201. His-294 serves as the catalytic Proton acceptor. Positions 295, 327, and 379 each coordinate substrate.

The protein belongs to the RuBisCO large chain family. Type I subfamily. In terms of assembly, heterohexadecamer of 8 large chains and 8 small chains; disulfide-linked. The disulfide link is formed within the large subunit homodimers. Mg(2+) serves as cofactor. The disulfide bond which can form in the large chain dimeric partners within the hexadecamer appears to be associated with oxidative stress and protein turnover.

Its subcellular location is the plastid. It is found in the chloroplast. The catalysed reaction is 2 (2R)-3-phosphoglycerate + 2 H(+) = D-ribulose 1,5-bisphosphate + CO2 + H2O. It carries out the reaction D-ribulose 1,5-bisphosphate + O2 = 2-phosphoglycolate + (2R)-3-phosphoglycerate + 2 H(+). Functionally, ruBisCO catalyzes two reactions: the carboxylation of D-ribulose 1,5-bisphosphate, the primary event in carbon dioxide fixation, as well as the oxidative fragmentation of the pentose substrate in the photorespiration process. Both reactions occur simultaneously and in competition at the same active site. The chain is Ribulose bisphosphate carboxylase large chain from Hordeum vulgare (Barley).